We begin with the raw amino-acid sequence, 293 residues long: Elongation factor Ts (293 aa).

The interval 80-83 (TDFV) is involved in Mg(2+) ion dislocation from EF-Tu.

This sequence belongs to the EF-Ts family.

The protein localises to the cytoplasm. Functionally, associates with the EF-Tu.GDP complex and induces the exchange of GDP to GTP. It remains bound to the aminoacyl-tRNA.EF-Tu.GTP complex up to the GTP hydrolysis stage on the ribosome. This Staphylococcus aureus (strain Mu3 / ATCC 700698) protein is Elongation factor Ts.